Consider the following 511-residue polypeptide: Cobyric acid synthase (511 aa).

In terms of domain architecture, GATase cobBQ-type spans 251–443 (LLDIAIICLP…IHGIFDNDVF (193 aa)). Cysteine 332 (nucleophile) is an active-site residue. The active site involves histidine 435.

Belongs to the CobB/CobQ family. CobQ subfamily.

It functions in the pathway cofactor biosynthesis; adenosylcobalamin biosynthesis. Its function is as follows. Catalyzes amidations at positions B, D, E, and G on adenosylcobyrinic A,C-diamide. NH(2) groups are provided by glutamine, and one molecule of ATP is hydrogenolyzed for each amidation. This is Cobyric acid synthase from Listeria monocytogenes serovar 1/2a (strain ATCC BAA-679 / EGD-e).